Reading from the N-terminus, the 427-residue chain is Enolase (427 aa).

Glutamine 163 serves as a coordination point for (2R)-2-phosphoglycerate. Glutamate 205 acts as the Proton donor in catalysis. Positions 242, 285, and 312 each coordinate Mg(2+). Residues lysine 337, arginine 366, serine 367, and lysine 388 each coordinate (2R)-2-phosphoglycerate. Residue lysine 337 is the Proton acceptor of the active site.

Belongs to the enolase family. It depends on Mg(2+) as a cofactor.

Its subcellular location is the cytoplasm. The protein resides in the secreted. It localises to the cell surface. The enzyme catalyses (2R)-2-phosphoglycerate = phosphoenolpyruvate + H2O. The protein operates within carbohydrate degradation; glycolysis; pyruvate from D-glyceraldehyde 3-phosphate: step 4/5. Catalyzes the reversible conversion of 2-phosphoglycerate (2-PG) into phosphoenolpyruvate (PEP). It is essential for the degradation of carbohydrates via glycolysis. The polypeptide is Enolase (Paraburkholderia xenovorans (strain LB400)).